We begin with the raw amino-acid sequence, 726 residues long: Quinolinate synthase, chloroplastic (726 aa).

The transit peptide at M1–T67 directs the protein to the chloroplast. The active-site Cysteine persulfide intermediate is the C133. 2 residues coordinate iminosuccinate: H283 and S309. C363 is a [4Fe-4S] cluster binding site. Residues Y392–N394 and S414 each bind iminosuccinate. C487 contacts [4Fe-4S] cluster. Iminosuccinate is bound by residues H513–E515 and T538. C643 contributes to the [4Fe-4S] cluster binding site.

The protein belongs to the quinolinate synthase family. Type 1 subfamily. As to quaternary structure, homodimer. [4Fe-4S] cluster is required as a cofactor.

It localises to the plastid. The protein resides in the chloroplast. The enzyme catalyses iminosuccinate + dihydroxyacetone phosphate = quinolinate + phosphate + 2 H2O + H(+). It functions in the pathway alkaloid biosynthesis; nicotine biosynthesis. It participates in cofactor biosynthesis; NAD(+) biosynthesis; quinolinate from iminoaspartate: step 1/1. Involved in the biosynthesis of pyridine alkaloid natural products, leading mainly to the production of anabasine, anatabine, nicotine and nornicotine, effective deterrents against herbivores with antiparasitic and pesticide properties (neurotoxins); nornicotine serves as the precursor in the synthesis of the carcinogen compound N'-nitrosonornicotine (NNN). Catalyzes the condensation of iminoaspartate with dihydroxyacetone phosphate to form quinolinate. The polypeptide is Quinolinate synthase, chloroplastic (Nicotiana tabacum (Common tobacco)).